Consider the following 490-residue polypeptide: MASNGHTLRLVINRDKHDSVIRGLYLVTDHDDNLIPRVEAAIDGGARVVQYRNKNQDRESRLALGLELRELCRRRSIPFIVNDDLEMAVSLKADGLHLGQGDGDPREARRVLGPGKIIGVSTHTLSEALEAQAAGVDYIGLGAMFPSRSKEVEHVAGSELLAAIRSSISIPIVAIGGITRDNGASVIDAGADAVAVISAVLSHPDPALAATEIALLFNRRAPFPRGSVLTVAGSDSGGGAGIQADLKTVTLLGSYGSSVLTALTAQNTRGVSGIHGVPPAFVADQLDAVFSDIPVDVVKTGMLFSAETIVAIAAKLTEYRRRMVVVDPVMVAKGGANLIDRGAVSVLKERLFPLAYLVTPNIPEAERLTGANISDEESMREAARRLHRLGARNVLLKGGHLLAGDSVDILFDGAAFHRFVSPRILSKNTHGTGCTFASAIATYLAQGDPLREAIARAKRYITAAIRLAQPLGRGHGPVNHILAAEDVRDR.

The interval 1-213 is thiamine-phosphate synthase; the sequence is MASNGHTLRL…PDPALAATEI (213 aa). 4-amino-2-methyl-5-(diphosphooxymethyl)pyrimidine-binding positions include 50-54 and N82; that span reads QYRNK. Residues D83 and D102 each coordinate Mg(2+). S121 is a binding site for 4-amino-2-methyl-5-(diphosphooxymethyl)pyrimidine. 147 to 149 lines the 2-[(2R,5Z)-2-carboxy-4-methylthiazol-5(2H)-ylidene]ethyl phosphate pocket; that stretch reads SRS. Residue K150 participates in 4-amino-2-methyl-5-(diphosphooxymethyl)pyrimidine binding. 2-[(2R,5Z)-2-carboxy-4-methylthiazol-5(2H)-ylidene]ethyl phosphate is bound by residues G177 and 197-198; that span reads IS. The tract at residues 229–490 is hydroxymethylpyrimidine/phosphomethylpyrimidine kinase; that stretch reads LTVAGSDSGG…ILAAEDVRDR (262 aa). Q266 serves as a coordination point for 4-amino-5-hydroxymethyl-2-methylpyrimidine.

It in the N-terminal section; belongs to the thiamine-phosphate synthase family. The protein in the C-terminal section; belongs to the ThiD family. Requires Mg(2+) as cofactor.

The enzyme catalyses 2-[(2R,5Z)-2-carboxy-4-methylthiazol-5(2H)-ylidene]ethyl phosphate + 4-amino-2-methyl-5-(diphosphooxymethyl)pyrimidine + 2 H(+) = thiamine phosphate + CO2 + diphosphate. The catalysed reaction is 2-(2-carboxy-4-methylthiazol-5-yl)ethyl phosphate + 4-amino-2-methyl-5-(diphosphooxymethyl)pyrimidine + 2 H(+) = thiamine phosphate + CO2 + diphosphate. It carries out the reaction 4-methyl-5-(2-phosphooxyethyl)-thiazole + 4-amino-2-methyl-5-(diphosphooxymethyl)pyrimidine + H(+) = thiamine phosphate + diphosphate. It catalyses the reaction 4-amino-5-hydroxymethyl-2-methylpyrimidine + ATP = 4-amino-2-methyl-5-(phosphooxymethyl)pyrimidine + ADP + H(+). The enzyme catalyses 4-amino-2-methyl-5-(phosphooxymethyl)pyrimidine + ATP = 4-amino-2-methyl-5-(diphosphooxymethyl)pyrimidine + ADP. It participates in cofactor biosynthesis; thiamine diphosphate biosynthesis; 4-amino-2-methyl-5-diphosphomethylpyrimidine from 5-amino-1-(5-phospho-D-ribosyl)imidazole: step 3/3. Its pathway is cofactor biosynthesis; thiamine diphosphate biosynthesis; thiamine phosphate from 4-amino-2-methyl-5-diphosphomethylpyrimidine and 4-methyl-5-(2-phosphoethyl)-thiazole: step 1/1. Its function is as follows. Condenses 4-methyl-5-(beta-hydroxyethyl)thiazole monophosphate (THZ-P) and 2-methyl-4-amino-5-hydroxymethyl pyrimidine pyrophosphate (HMP-PP) to form thiamine monophosphate (TMP). Functionally, catalyzes the phosphorylation of hydroxymethylpyrimidine phosphate (HMP-P) to HMP-PP, and of HMP to HMP-P. This Geobacter sulfurreducens (strain ATCC 51573 / DSM 12127 / PCA) protein is Thiamine biosynthesis bifunctional protein ThiED (thiDE).